The following is a 69-amino-acid chain: Alpha-elapitoxin-Lc2c (69 aa).

4 disulfides stabilise this stretch: cysteine 3–cysteine 20, cysteine 13–cysteine 41, cysteine 45–cysteine 56, and cysteine 57–cysteine 62.

It belongs to the three-finger toxin family. Long-chain subfamily. Type II alpha-neurotoxin sub-subfamily. Expressed by the venom gland.

Its subcellular location is the secreted. Binds with high affinity to muscular nicotinic acetylcholine receptors (nAChRs), whereas it binds with a low affinity to neuronal alpha-7/CHRNA7 nAChRs. The chain is Alpha-elapitoxin-Lc2c from Laticauda colubrina (Yellow-lipped sea krait).